A 583-amino-acid polypeptide reads, in one-letter code: METPNQDSGRTPTEQSAANDLSVADRQVNILRDKLRHIDRQLAAATQNNTKLVSMLETAKAEILRLKNALDQEGQPPYSFGTILQLNPRRQPAPGNSGQAATEESADIFNAGRKMRVGLSPLVNINQLTVGQEVLLNEALLIVAGLGYERAGELATLKEMLGADRALVVGRADEERVVRLSGALLAQKLRVGDALSIDSRTGYALEKVPRSEVENLVLEEVPDITYEDIGGLGPQIEQIRDAVELPFLHPDLYREHGLKAPKGILLYGPPGCGKTLIAKAVANSLAARAAERSGNVDLKSYFLNIKGPELLDKYVGETERHIRLIFARAREKASDGSPVVVFFDEMDSLFRTRGTGISSDVETTIVPQLLSEIDGVERLDNVIVIGASNREDMIDPAILRPGRLDVKVKIHRPDAEAAADIFNKYITPDLPFHESDLAEHNGDVQATVDAMVQRTVEAMYSTDKSNEFLEVTYANGDTEMLYFKDFNSGAVVQNVVDRAKKYAIKDLLTSQQRGLRIEHLLRAVVDEFREHEDMPNTTNPDDWARISGKKGERITYIRTIVQGKAGQEPGKSIETTPTTGQYL.

A compositionally biased stretch (polar residues) spans 1-19 (METPNQDSGRTPTEQSAAN). The segment at 1-22 (METPNQDSGRTPTEQSAANDLS) is disordered. Residues 24 to 75 (ADRQVNILRDKLRHIDRQLAAATQNNTKLVSMLETAKAEILRLKNALDQEGQ) are a coiled coil. 271-276 (GCGKTL) contacts ATP. Positions 582-583 (YL) are docks into pockets in the proteasome alpha-ring.

It belongs to the AAA ATPase family. In terms of assembly, homohexamer. Assembles into a hexameric ring structure that caps the 20S proteasome core. Strongly interacts with the prokaryotic ubiquitin-like protein Pup through a hydrophobic interface; the interacting region of ARC lies in its N-terminal coiled-coil domain. There is one Pup binding site per ARC hexamer ring. Upon ATP-binding, the C-terminus of ARC interacts with the alpha-rings of the proteasome core, possibly by binding to the intersubunit pockets.

The protein operates within protein degradation; proteasomal Pup-dependent pathway. ATPase which is responsible for recognizing, binding, unfolding and translocation of pupylated proteins into the bacterial 20S proteasome core particle. May be essential for opening the gate of the 20S proteasome via an interaction with its C-terminus, thereby allowing substrate entry and access to the site of proteolysis. Thus, the C-termini of the proteasomal ATPase may function like a 'key in a lock' to induce gate opening and therefore regulate proteolysis. The polypeptide is Proteasome-associated ATPase (Pseudarthrobacter chlorophenolicus (strain ATCC 700700 / DSM 12829 / CIP 107037 / JCM 12360 / KCTC 9906 / NCIMB 13794 / A6) (Arthrobacter chlorophenolicus)).